A 384-amino-acid chain; its full sequence is tRNA-specific 2-thiouridylase MnmA (384 aa).

ATP contacts are provided by residues 18–25 and L44; that span reads AMSGGVDS. Catalysis depends on C112, which acts as the Nucleophile. C112 and C209 are oxidised to a cystine. Residue G136 participates in ATP binding. The interval 159 to 161 is interaction with tRNA; sequence RDQ. The active-site Cysteine persulfide intermediate is the C209.

This sequence belongs to the MnmA/TRMU family.

It localises to the cytoplasm. The catalysed reaction is S-sulfanyl-L-cysteinyl-[protein] + uridine(34) in tRNA + AH2 + ATP = 2-thiouridine(34) in tRNA + L-cysteinyl-[protein] + A + AMP + diphosphate + H(+). Its function is as follows. Catalyzes the 2-thiolation of uridine at the wobble position (U34) of tRNA, leading to the formation of s(2)U34. The protein is tRNA-specific 2-thiouridylase MnmA of Methylobacterium radiotolerans (strain ATCC 27329 / DSM 1819 / JCM 2831 / NBRC 15690 / NCIMB 10815 / 0-1).